Consider the following 862-residue polypeptide: Glucans biosynthesis glucosyltransferase H (862 aa).

Residues 1–25 form a disordered region; that stretch reads MELPATSGLNAQPGNAEGTTASTRP. The segment covering 7–25 has biased composition (polar residues); that stretch reads SGLNAQPGNAEGTTASTRP. 5 helical membrane-spanning segments follow: residues 188-210, 545-567, 597-619, 626-648, and 708-730; these read RLTL…SSVL, GVMA…ALLA, ALFS…VLWA, GGAV…AAPV, and FLWW…VFSS.

It belongs to the glycosyltransferase 2 family. OpgH subfamily.

It is found in the cell inner membrane. The protein operates within glycan metabolism; osmoregulated periplasmic glucan (OPG) biosynthesis. Its function is as follows. Involved in the biosynthesis of osmoregulated periplasmic glucans (OPGs). The protein is Glucans biosynthesis glucosyltransferase H of Ralstonia nicotianae (strain ATCC BAA-1114 / GMI1000) (Ralstonia solanacearum).